A 220-amino-acid polypeptide reads, in one-letter code: Glutathione S-transferase U26 (220 aa).

One can recognise a GST N-terminal domain in the interval 4-83; the sequence is DQVILLDYWP…YIDEVWSDAS (80 aa). Glutathione contacts are provided by residues 14-15, 40-41, 54-55, and 67-68; these read SM, VK, KI, and ES. In terms of domain architecture, GST C-terminal spans 89–210; it reads DPYQKSRARF…ADSDRIIEYV (122 aa).

It belongs to the GST superfamily. Tau family.

The protein localises to the cytoplasm. Its subcellular location is the cytosol. The catalysed reaction is RX + glutathione = an S-substituted glutathione + a halide anion + H(+). Functionally, in vitro, possesses glutathione S-transferase activity toward 1-chloro-2,4-dinitrobenzene (CDNB). May be involved in the conjugation of reduced glutathione to a wide number of exogenous and endogenous hydrophobic electrophiles and have a detoxification role against certain herbicides. In Arabidopsis thaliana (Mouse-ear cress), this protein is Glutathione S-transferase U26 (GSTU26).